A 125-amino-acid chain; its full sequence is Kappa-casein (125 aa).

The disordered stretch occupies residues Leu42 to Ile63. A glycan (O-linked (GalNAc...) threonine) is linked at Thr97. Ser104 bears the Phosphoserine; alternate mark. Residue Ser104 is glycosylated (O-linked (GalNAc...) serine; alternate). A glycan (O-linked (GalNAc...) threonine) is linked at Thr121. Residue Ser122 is modified to Phosphoserine.

The protein belongs to the kappa-casein family. Mammary gland specific. Secreted in milk.

It is found in the secreted. Functionally, kappa-casein stabilizes micelle formation, preventing casein precipitation in milk. The chain is Kappa-casein (CSN3) from Lama guanicoe (Guanaco).